Reading from the N-terminus, the 97-residue chain is High mobility group protein homolog NHP1 (97 aa).

The segment at 1 to 24 (MAGASDRTGVRRPRKAKKDPNAPK) is disordered. Positions 23-93 (PKRALSSYMF…RYEREKAEYA (71 aa)) form a DNA-binding region, HMG box.

The protein resides in the nucleus. The protein is High mobility group protein homolog NHP1 of Babesia bovis.